Consider the following 109-residue polypeptide: UPF0060 membrane protein PCC8801_1733 (109 aa).

The next 4 membrane-spanning stretches (helical) occupy residues 7–27 (LLYF…VWLW), 36–56 (YALL…LQTA), 58–78 (FGRV…LWGW), and 87–107 (SYDW…MYAP).

Belongs to the UPF0060 family.

The protein resides in the cell inner membrane. The chain is UPF0060 membrane protein PCC8801_1733 from Rippkaea orientalis (strain PCC 8801 / RF-1) (Cyanothece sp. (strain PCC 8801)).